Here is a 167-residue protein sequence, read N- to C-terminus: Ribosome maturation factor RimM (167 aa).

In terms of domain architecture, PRC barrel spans 94–166; sequence TGRAYLHELI…YMVVPRFDEF (73 aa).

The protein belongs to the RimM family. In terms of assembly, binds ribosomal protein uS19.

The protein resides in the cytoplasm. Functionally, an accessory protein needed during the final step in the assembly of 30S ribosomal subunit, possibly for assembly of the head region. Essential for efficient processing of 16S rRNA. May be needed both before and after RbfA during the maturation of 16S rRNA. It has affinity for free ribosomal 30S subunits but not for 70S ribosomes. The protein is Ribosome maturation factor RimM of Chlorobium phaeobacteroides (strain DSM 266 / SMG 266 / 2430).